Here is a 258-residue protein sequence, read N- to C-terminus: Flagellin B3 (258 aa).

The propeptide occupies 1-8 (MRFLKKRG).

It belongs to the archaeal flagellin family.

The protein resides in the archaeal flagellum. Its function is as follows. Flagellin is the subunit protein which polymerizes to form the filaments of archaeal flagella. The protein is Flagellin B3 (flaB3) of Thermococcus kodakarensis (strain ATCC BAA-918 / JCM 12380 / KOD1) (Pyrococcus kodakaraensis (strain KOD1)).